A 188-amino-acid chain; its full sequence is Elongation factor P (188 aa).

It belongs to the elongation factor P family.

It is found in the cytoplasm. The protein operates within protein biosynthesis; polypeptide chain elongation. Functionally, involved in peptide bond synthesis. Stimulates efficient translation and peptide-bond synthesis on native or reconstituted 70S ribosomes in vitro. Probably functions indirectly by altering the affinity of the ribosome for aminoacyl-tRNA, thus increasing their reactivity as acceptors for peptidyl transferase. The sequence is that of Elongation factor P from Methylobacterium sp. (strain 4-46).